The following is a 53-amino-acid chain: Photoreceptor disk component PRCD (53 aa).

The S-palmitoyl cysteine moiety is linked to residue C2. A disordered region spans residues 24-53; that stretch reads PEPSRVDGTVVGSGSDTDLQSTGREKGPVK. Residues 35–45 show a composition bias toward polar residues; that stretch reads GSGSDTDLQST.

The protein belongs to the PRCD family. As to quaternary structure, interacts with RHO/rhodopsin; the interaction promotes PRCD stability. Post-translationally, palmitoylated at Cys-2. Palmitoylation is essential for protein stability and trafficking to the photoreceptor outer segment, but does not appear to be essential for membrane localization. Probably palmitoylated by ZDHHC3. In terms of processing, phosphorylated. In terms of tissue distribution, expressed in retina, where it localizes to both rod and cone photoreceptors (at protein level).

It is found in the cell projection. It localises to the cilium. The protein localises to the photoreceptor outer segment. Its subcellular location is the membrane. The protein resides in the endoplasmic reticulum. It is found in the golgi apparatus. In terms of biological role, involved in vision. In Mus musculus (Mouse), this protein is Photoreceptor disk component PRCD.